Here is a 542-residue protein sequence, read N- to C-terminus: Coiled-coil domain-containing protein 60 (542 aa).

Residues Thr70–Gln97 adopt a coiled-coil conformation. Disordered regions lie at residues Ala228–Val284 and Gln334–Lys358. 2 stretches are compositionally biased toward low complexity: residues Ser245–Ser261 and Arg342–His351.

This Rattus norvegicus (Rat) protein is Coiled-coil domain-containing protein 60 (Ccdc60).